Reading from the N-terminus, the 165-residue chain is Transmembrane protein 128 (165 aa).

The next 4 helical transmembrane spans lie at 49 to 69 (NIHS…VDFF), 81 to 101 (WFLF…YCIV), 119 to 139 (LIPI…VALW), and 144 to 164 (FFTP…TSLL).

The protein resides in the membrane. The sequence is that of Transmembrane protein 128 (TMEM128) from Bos taurus (Bovine).